A 287-amino-acid chain; its full sequence is Acetyl-coenzyme A carboxylase carboxyl transferase subunit beta (287 aa).

In terms of domain architecture, CoA carboxyltransferase N-terminal spans 36–287 (MWVKCDRCGK…KVLYKILELH (252 aa)). Cys-40, Cys-43, Cys-59, and Cys-62 together coordinate Zn(2+). Residues 40 to 62 (CDRCGKTLYKKDLDENLKVCKFC) form a C4-type zinc finger.

Belongs to the AccD/PCCB family. Acetyl-CoA carboxylase is a heterohexamer composed of biotin carboxyl carrier protein (AccB), biotin carboxylase (AccC) and two subunits each of ACCase subunit alpha (AccA) and ACCase subunit beta (AccD). Requires Zn(2+) as cofactor.

The protein resides in the cytoplasm. It catalyses the reaction N(6)-carboxybiotinyl-L-lysyl-[protein] + acetyl-CoA = N(6)-biotinyl-L-lysyl-[protein] + malonyl-CoA. It functions in the pathway lipid metabolism; malonyl-CoA biosynthesis; malonyl-CoA from acetyl-CoA: step 1/1. Component of the acetyl coenzyme A carboxylase (ACC) complex. Biotin carboxylase (BC) catalyzes the carboxylation of biotin on its carrier protein (BCCP) and then the CO(2) group is transferred by the transcarboxylase to acetyl-CoA to form malonyl-CoA. This is Acetyl-coenzyme A carboxylase carboxyl transferase subunit beta from Clostridium novyi (strain NT).